The primary structure comprises 276 residues: Cytoskeleton protein RodZ (276 aa).

Over 1–110 (MTSMRKKTIG…SSKKKKKKTS (110 aa)) the chain is Cytoplasmic. A helical; Signal-anchor for type II membrane protein transmembrane segment spans residues 111–131 (FLPLFYFILFALSILIFVTYY). Over 132–276 (VWNYIQTQPE…GQITVTFTKN (145 aa)) the chain is Extracellular.

It belongs to the RodZ family. Interacts with MltG and MreC in the elongasome. Interacts with KhpB (also called EloR/Jag).

It localises to the cell membrane. In terms of biological role, cytoskeletal protein that is involved in cell-shape control through regulation of the length of the long axis. Probably part of the elongasome which synthesizes peripheral peptidoglycan. In Streptococcus pneumoniae (strain ATCC BAA-255 / R6), this protein is Cytoskeleton protein RodZ.